Consider the following 185-residue polypeptide: Thymidine kinase (185 aa).

ATP-binding positions include 7–14 (GPMFAGKT) and 83–86 (DEIQ). Glu-84 functions as the Proton acceptor in the catalytic mechanism. Residues Cys-139, Cys-142, Cys-177, and His-180 each coordinate Zn(2+).

It belongs to the thymidine kinase family. As to quaternary structure, homotetramer.

The protein localises to the cytoplasm. It catalyses the reaction thymidine + ATP = dTMP + ADP + H(+). The protein is Thymidine kinase of Pyrobaculum aerophilum (strain ATCC 51768 / DSM 7523 / JCM 9630 / CIP 104966 / NBRC 100827 / IM2).